The primary structure comprises 388 residues: L-cysteine desulfidase (388 aa).

Residue Cys-25 is the Proton acceptor of the active site. Residues Cys-282, Cys-322, and Cys-329 each coordinate [4Fe-4S] cluster.

The protein belongs to the L-cysteine desulfidase family. As to quaternary structure, homotrimer. The cofactor is [4Fe-4S] cluster.

The enzyme catalyses L-cysteine + H2O = hydrogen sulfide + pyruvate + NH4(+) + H(+). Catalyzes the cleavage of L-cysteine to form 2-aminoprop-2-enoate and sulfide. The former then spontaneously hydrolyzes to pyruvate and NH(3). May be responsible for the production of sulfide required for the biosynthesis of iron-sulfur centers in this archaea. Is very specific for L-cysteine, with no activity being detected with D-cysteine, L-homocysteine, 3-mercaptopropionate (cysteine without the amino group), cysteamine (cysteine without the carboxylate), or mercaptolactate (the hydroxyl analog of cysteine). This chain is L-cysteine desulfidase, found in Methanocaldococcus jannaschii (strain ATCC 43067 / DSM 2661 / JAL-1 / JCM 10045 / NBRC 100440) (Methanococcus jannaschii).